A 304-amino-acid polypeptide reads, in one-letter code: Nucleotide-binding protein SH2124 (304 aa).

19–26 (GLSGAGKS) lines the ATP pocket. Position 70–73 (70–73 (DLRG)) interacts with GTP.

It belongs to the RapZ-like family.

Its function is as follows. Displays ATPase and GTPase activities. The polypeptide is Nucleotide-binding protein SH2124 (Staphylococcus haemolyticus (strain JCSC1435)).